We begin with the raw amino-acid sequence, 59 residues long: UPF0434 protein plu1633 (59 aa).

It belongs to the UPF0434 family.

This is UPF0434 protein plu1633 from Photorhabdus laumondii subsp. laumondii (strain DSM 15139 / CIP 105565 / TT01) (Photorhabdus luminescens subsp. laumondii).